The sequence spans 486 residues: Malonate-semialdehyde dehydrogenase (486 aa).

NAD(+) is bound by residues Phe-154, Lys-178, Glu-181, Arg-182, and Ser-231. Cys-286 serves as the catalytic Nucleophile. Residue Glu-386 coordinates NAD(+).

This sequence belongs to the aldehyde dehydrogenase family. IolA subfamily. Homotetramer.

The catalysed reaction is 3-oxopropanoate + NAD(+) + CoA + H2O = hydrogencarbonate + acetyl-CoA + NADH + H(+). It catalyses the reaction 2-methyl-3-oxopropanoate + NAD(+) + CoA + H2O = propanoyl-CoA + hydrogencarbonate + NADH + H(+). It functions in the pathway polyol metabolism; myo-inositol degradation into acetyl-CoA; acetyl-CoA from myo-inositol: step 7/7. Functionally, catalyzes the oxidation of malonate semialdehyde (MSA) and methylmalonate semialdehyde (MMSA) into acetyl-CoA and propanoyl-CoA, respectively. Is involved in a myo-inositol catabolic pathway. Bicarbonate, and not CO2, is the end-product of the enzymatic reaction. This is Malonate-semialdehyde dehydrogenase from Bacillus cereus (strain AH187).